The following is a 358-amino-acid chain: DNA methyltransferase CcrM (358 aa).

Positions Met1–Asp260 are methyltransferase. DNA-binding regions (target strand DNA) lie at residues Asp31–Tyr34 and Gly39–Pro45. 2 consecutive DNA-binding regions (non-target strand DNA) follow at residues Tyr93 to His94 and Trp109 to Ile110. His94 is a dsDNA binding site. Residues Met122–Asn132 constitute a DNA-binding region (target strand DNA). The segment at residues Tyr153–Lys157 is a DNA-binding region (non-target strand DNA). DsDNA-binding residues include Gln164 and Arg179. Residues Lys187 to Lys193 constitute a DNA-binding region (target strand DNA). The region spanning Glu259 to Ala355 is the RAMA domain. Residues Leu261–Glu270 are linker. Positions 267 and 272 each coordinate dsDNA. The segment at Arg272–Asn358 is non-specific DNA-binding. 2 DNA-binding regions (non-target strand DNA) span residues Ser315 to His317 and Asn330 to Trp332. Arg350 contacts dsDNA.

This sequence belongs to the N(4)/N(6)-methyltransferase family. Homodimer. In terms of processing, rapidly degraded by Lon protease prior to cell division.

It catalyses the reaction a 2'-deoxyadenosine in DNA + S-adenosyl-L-methionine = an N(6)-methyl-2'-deoxyadenosine in DNA + S-adenosyl-L-homocysteine + H(+). Its function is as follows. A beta subtype methylase that recognizes the double-stranded sequence 5'-GANTC-3' and methylates non-modifed A-2 on the hemimethylated, post-replicative DNA. Opens a bubble in the DNA at the recognition site, allowing precise recognition of the sequence and ensuring enzyme specificity. Functions only in the predivisional cell. Responsible for 5'-GANTC-3' methylation in the cell; methylation of hemimethylated sites generated after replication fork passage occurs late in the predivisional cell, near completion of chromosome replication but prior to cell division. Contributes to the accurate cell-cycle control of DNA replication and cellular morphology. The sequence is that of DNA methyltransferase CcrM (ccrMIM) from Caulobacter vibrioides (strain ATCC 19089 / CIP 103742 / CB 15) (Caulobacter crescentus).